The following is a 319-amino-acid chain: Tyrosine--tRNA ligase (319 aa).

Y40 provides a ligand contact to L-tyrosine. The 'HIGH' region motif lies at 45–53; that stretch reads PSGRIHMGH. Residues Y159, Q163, D166, and Q181 each coordinate L-tyrosine. Positions 216 to 220 match the 'KMSKS' region motif; that stretch reads KMSSS. Position 219 (S219) interacts with ATP.

The protein belongs to the class-I aminoacyl-tRNA synthetase family. TyrS type 3 subfamily. As to quaternary structure, homodimer.

The protein resides in the cytoplasm. The catalysed reaction is tRNA(Tyr) + L-tyrosine + ATP = L-tyrosyl-tRNA(Tyr) + AMP + diphosphate + H(+). Catalyzes the attachment of tyrosine to tRNA(Tyr) in a two-step reaction: tyrosine is first activated by ATP to form Tyr-AMP and then transferred to the acceptor end of tRNA(Tyr). The chain is Tyrosine--tRNA ligase from Methanococcus maripaludis (strain DSM 14266 / JCM 13030 / NBRC 101832 / S2 / LL).